The chain runs to 400 residues: Acetate kinase (400 aa).

Position 10 (asparagine 10) interacts with Mg(2+). Lysine 17 contributes to the ATP binding site. Residue arginine 89 participates in substrate binding. Residue aspartate 148 is the Proton donor/acceptor of the active site. ATP is bound by residues 208–212 (HLGNG), 283–285 (DCR), and 331–335 (GIGEN). Glutamate 385 serves as a coordination point for Mg(2+).

This sequence belongs to the acetokinase family. As to quaternary structure, homodimer. Mg(2+) serves as cofactor. It depends on Mn(2+) as a cofactor.

The protein localises to the cytoplasm. It catalyses the reaction acetate + ATP = acetyl phosphate + ADP. Its pathway is metabolic intermediate biosynthesis; acetyl-CoA biosynthesis; acetyl-CoA from acetate: step 1/2. In terms of biological role, catalyzes the formation of acetyl phosphate from acetate and ATP. Can also catalyze the reverse reaction. The polypeptide is Acetate kinase (Haemophilus ducreyi (strain 35000HP / ATCC 700724)).